Consider the following 858-residue polypeptide: MAHFSRVASDPSLAPQPSAPSGLDSSTTSSSSTGLHRSCTFCRARKIRCSSGPICSACRERNINCIYSPEARKGRPRRRGTNTSNAQAKKGDQENPTLGRELDRMFQEYFISKTGSRSNLFQNSIASFHRHIRKPTPAHTPAPTPRPKLSYDSLLSFLAHEMVEVLLLRFGAFGDEQLQSNPHQYFYITSLADETTPSMFDPPRRQKSPLAALGKHRVVQMVHFWFFMHPLSAVVSKTLLLSAIQDETVDTALLAIILADAFESFDPKDNPNTTGSVRPEESPQELLQFAASQLQHRPCSNVDAGPISTAQALILLGWREMSQGNARRATCYIGYTCRVVAREHQRRSRDEGDRERMKLNGTDIGEVEQEILRNIYWLCLSTTTWAFMQIDQPFTLLVPDEIPDFPSLDETTSAVLCLDRASNNISTLPSQVQAMRWLWPLSHVTSTVAHIYTLYLNAPTEESKVHAAPWHTRHIYQLHRLLRSRFHPSNLSLEIHGILIQAIQLVEREVTIPSTKSFLLTSYYTIIVHILFSPERRAPTPITPAIIQALGECISAILTIAARVPSLPTSQVPAQSSYATRTLAVSLDSCSHALVRLHSQYDWQLKEHRDAAPALTKLADYADQAHQVCRSDFLGNYASVLRPAKKRLKWVKSALRALCMSPSSQPVSMSEVTDAANAAFPSLSPKKTPFSLDRPGDLSLGSSACSIHDFIPQSPGFPPSQLVPPLEIPDPGFFSDNASFESLLGFPGMARSDIYSRTSNSPSSHLTMGTLDGQAFGNLFLMSPDISAPDVDSMLQSNPFDTSNPVSNSGAERVCGTGAGLLGRSTGAQYDSHLHMDASKPFPAWNPGIAEEYGKYGE.

Residues 1-35 are disordered; that stretch reads MAHFSRVASDPSLAPQPSAPSGLDSSTTSSSSTGL. Positions 39 to 65 form a DNA-binding region, zn(2)-C6 fungal-type; the sequence is CTFCRARKIRCSSGPICSACRERNINC. Residues 72–99 are disordered; sequence RKGRPRRRGTNTSNAQAKKGDQENPTLG.

It is found in the nucleus. Transcription factor that regulates the expression of the gene cluster that mediates the biosynthesis of Pyranterreones, a family of antioxidative compounds. The chain is Transcription factor pytR from Aspergillus terreus (strain NIH 2624 / FGSC A1156).